A 159-amino-acid chain; its full sequence is MDKVIYPGTFDPITRGHEDLIQRASRLFDQVVVAVAANSGKSPCFSLEERVEMARAVLAEYANVEVTGFSGLLMEFTRQQQAHVIVRGLRAVSDFEYEFQLAGMNRSLYPDVETIFLTPSEQYMFISATIVREIARLGGDASKFVHPLVAERLYEKRKK.

Residue threonine 9 coordinates substrate. ATP is bound by residues 9-10 and histidine 17; that span reads TF. Positions 41, 73, and 87 each coordinate substrate. ATP contacts are provided by residues 88 to 90, glutamate 98, and 123 to 129; these read GLR and YMFISAT.

It belongs to the bacterial CoaD family. As to quaternary structure, homohexamer. The cofactor is Mg(2+).

Its subcellular location is the cytoplasm. The enzyme catalyses (R)-4'-phosphopantetheine + ATP + H(+) = 3'-dephospho-CoA + diphosphate. The protein operates within cofactor biosynthesis; coenzyme A biosynthesis; CoA from (R)-pantothenate: step 4/5. Functionally, reversibly transfers an adenylyl group from ATP to 4'-phosphopantetheine, yielding dephospho-CoA (dPCoA) and pyrophosphate. The protein is Phosphopantetheine adenylyltransferase of Nitrosomonas europaea (strain ATCC 19718 / CIP 103999 / KCTC 2705 / NBRC 14298).